The primary structure comprises 409 residues: FAD-dependent monooxygenase phnB (409 aa).

FAD contacts are provided by glutamate 35, alanine 50, arginine 110, and aspartate 311.

It belongs to the paxM FAD-dependent monooxygenase family. It depends on FAD as a cofactor.

The catalysed reaction is 3,6,7,9-tetrahydroxy-3-methyl-2,3-dihydro-1H-naphtho[2,1-b]pyran-1-one + NADPH + O2 + H(+) = 2,3,4,7,9-pentahydroxy-6-methyl-1H-phenalen-1-one + NADP(+) + 2 H2O. Its pathway is secondary metabolite biosynthesis. Functionally, FAD-dependent monooxygenase; part of the gene cluster that mediates the biosynthesis of phenalenones such as herqueinone, compounds that have been reported to treat tumors, bacterial infections and/or mycoses, and rheumatic diseases. The non-reducing polyketide synthase phnA synthesizes the heptaketide backbone and cyclizes it into the angular, hemiketal-containing naphtho-gamma-pyrone prephenalenone. The product template (PT) domain of phnA catalyzes only the C4-C9 aldol condensation, which is unprecedented among known PT domains. The transformation of prephenalenone to phenalenones requires an FAD-dependent monooxygenase phnB, which catalyzes the C2 aromatic hydroxylation of prephenalenone and ring opening of the gamma-pyrone ring simultaneously. Subsequent intramolecular deprotonation of C3 phenolic oxygen accelerates phenalenone ring closure to yield the tricyclic phenalenone core with a C2 hydroxylation. The prenyltransferase phnF further catalyzes reverse C-prenylation of phenalenone by direct electrophilic substitution at C6, or possibly via first a forward O-prenylation of a neighboring phenol in phenalenone, followed by a Claisen rearrangement. The hydroalkoxylation enzyme phnH catalyzes the 5-exo-trig cyclization via acid catalysis after the spontaneous deprotonation of 7-OH, which leads to the formation of the dihydrobenzofuran atrovenetin. Atrovenetin is further converted to deoxyherqueinone by the O-methyltransferase phnC which can methylate C2-OH to stabilize the northern portion of the phenalenone core. Finally, the oxidoreductase phnG converts deoxyherqueinone to herqueinone via C6 hydroxylation. The chain is FAD-dependent monooxygenase phnB from Penicillium herquei.